Here is a 274-residue protein sequence, read N- to C-terminus: UPF0758 protein RHE_CH01848 (274 aa).

Residues 1–37 (MAKGPVATSSDDELPFETEEPVADERSFFGGRPQKPA) form a disordered region. Residues 10–22 (SDDELPFETEEPV) are compositionally biased toward acidic residues. The MPN domain occupies 152 to 274 (VLSSWSSVIQ…HVSLKGLKLI (123 aa)). Residues His-223, His-225, and Asp-236 each contribute to the Zn(2+) site. The JAMM motif motif lies at 223-236 (HNHPSGDPTPSRAD).

This sequence belongs to the UPF0758 family.

This is UPF0758 protein RHE_CH01848 from Rhizobium etli (strain ATCC 51251 / DSM 11541 / JCM 21823 / NBRC 15573 / CFN 42).